A 530-amino-acid chain; its full sequence is Cytochrome P450 monooxygenase sttB (530 aa).

N5 carries N-linked (GlcNAc...) asparagine glycosylation. The helical transmembrane segment at 24-44 (LPILTVALLTGIASAVYINVS) threads the bilayer. N-linked (GlcNAc...) asparagine glycosylation is present at N230.

Belongs to the cytochrome P450 family. Heme is required as a cofactor.

Its subcellular location is the membrane. The catalysed reaction is preaspterpenacid acid I + reduced [NADPH--hemoprotein reductase] + O2 = preaspterpenacid acid II + oxidized [NADPH--hemoprotein reductase] + H2O + H(+). The protein operates within secondary metabolite biosynthesis; terpenoid biosynthesis. Its function is as follows. Cytochrome P450 monooxygenase; part of the gene cluster that mediates the biosynthesis of aspterpenacids. Performs the C22-oxidative modification of the terpene synthase sttA product preaspterpenacid I to produce preaspterpenacid II. It has still to be determined how preaspterpenacid II is further modified to produce aspterpenacids. In Aspergillus terreus (strain NIH 2624 / FGSC A1156), this protein is Cytochrome P450 monooxygenase sttB.